We begin with the raw amino-acid sequence, 427 residues long: Glutamate-1-semialdehyde 2,1-aminomutase (427 aa).

K265 is subject to N6-(pyridoxal phosphate)lysine.

This sequence belongs to the class-III pyridoxal-phosphate-dependent aminotransferase family. HemL subfamily. In terms of assembly, homodimer. It depends on pyridoxal 5'-phosphate as a cofactor.

The protein localises to the cytoplasm. The catalysed reaction is (S)-4-amino-5-oxopentanoate = 5-aminolevulinate. Its pathway is porphyrin-containing compound metabolism; protoporphyrin-IX biosynthesis; 5-aminolevulinate from L-glutamyl-tRNA(Glu): step 2/2. In Burkholderia cenocepacia (strain ATCC BAA-245 / DSM 16553 / LMG 16656 / NCTC 13227 / J2315 / CF5610) (Burkholderia cepacia (strain J2315)), this protein is Glutamate-1-semialdehyde 2,1-aminomutase.